A 610-amino-acid chain; its full sequence is MENLISLVNKIQRACTALGDHGENSALPTLWDSLPAIAVVGGQSSGKSSVLESVVGKDFLPRGSGIVTRRPLVLQLHKIDEGSREYAEFLHLPRKRFTDFVAVRKEIQDETDRETGRTKQISSVPIHLSIYSPNVVNLTLIDLPGLTKVAVEGQPDSIVKDIEDMVRSYIEKPNCIILAISPANQDLATSDAIKISREVDPTGDRTIGVLTKIDLMDKGTDAVDILEGRAYRLKFPWIGVVNRSQQDINKNVDMIAARRREREYFNSTPEYKHLANRMGSEHLAKMLSKHLETVIKSKIPGIQSLINKTIAELEAELTRLGKPVAADAGGKLYAIMEICRSFDQIFKDHLDGVRPGGDKIYNVFDNQLPAALKRLQFDKQLSMENIRKLITEADGYQPHLIAPEQGYRRLIESSLITIRGPAESAVDAVHSLLKDLVHKAMSETLDLKQYPGLRVEVGAASVDSLERMRDESKRATLQLVDMECGYLTVDFFRKLPQDVDKGGNPTHSICDRYNDSYLRRIGTTILSYVNMVCATLRHSIPKSIVYCQVREAKRSLLDHFFTELGKMEIKRLSSLLNEDPAIMERRSALAKRLELYRSAQAEIDAVAWSK.

The 270-residue stretch at 31 to 300 (WDSLPAIAVV…LETVIKSKIP (270 aa)) folds into the Dynamin-type G domain. Residues 41–48 (GGQSSGKS) are G1 motif. 44–49 (SSGKSS) is a GTP binding site. The interval 67-69 (VTR) is G2 motif. The G3 motif stretch occupies residues 142–145 (DLPG). The G4 motif stretch occupies residues 211–214 (TKID). Residues 212-217 (KIDLMD) and 242-245 (NRSQ) contribute to the GTP site. The segment at 241–244 (VNRS) is G5 motif. Positions 518-610 (LRRIGTTILS…AEIDAVAWSK (93 aa)) constitute a GED domain.

Belongs to the TRAFAC class dynamin-like GTPase superfamily. Dynamin/Fzo/YdjA family. As to quaternary structure, may homooligomerize and heterooligomerize. May interact with CALS1 and UGT1. As to expression, expressed in seedling root tips and root elongation zones, young root nodules and young leaves.

It is found in the cytoplasm. The protein localises to the cytoskeleton. It localises to the phragmoplast. Functionally, microtubule-associated force-producing protein that is targeted to the forming cell plate during cytokinesis. May be involved in attaching Golgi-derived vesicles to microtubules which direct vesicles to the forming cell plate during cytokinesis. Possesses intrinsic GTPase activity in vitro. In Glycine max (Soybean), this protein is Dynamin-related protein 12A.